The following is a 228-amino-acid chain: Probable septum site-determining protein MinC (228 aa).

Belongs to the MinC family. In terms of assembly, interacts with MinD and FtsZ.

Its function is as follows. Cell division inhibitor that blocks the formation of polar Z ring septums. Rapidly oscillates between the poles of the cell to destabilize FtsZ filaments that have formed before they mature into polar Z rings. Prevents FtsZ polymerization. The sequence is that of Probable septum site-determining protein MinC from Symbiobacterium thermophilum (strain DSM 24528 / JCM 14929 / IAM 14863 / T).